A 156-amino-acid polypeptide reads, in one-letter code: Small ribosomal subunit protein uS7 (156 aa).

The protein belongs to the universal ribosomal protein uS7 family. Part of the 30S ribosomal subunit. Contacts proteins S9 and S11.

One of the primary rRNA binding proteins, it binds directly to 16S rRNA where it nucleates assembly of the head domain of the 30S subunit. Is located at the subunit interface close to the decoding center, probably blocks exit of the E-site tRNA. The sequence is that of Small ribosomal subunit protein uS7 from Metamycoplasma arthritidis (strain 158L3-1) (Mycoplasma arthritidis).